Consider the following 293-residue polypeptide: MTLIDGKAISEQVKQEIAAEVAEIVAHGGKRPHLAAILVGHDGGSETYVAAKVKACEVCGFKSSLIRYESDVTEDELLAKVRELNEDDDVDGFIVQLPLPKHISEQKVIETIDYRKDVDGFHPINVGRMSIGLPCYVSATPNGILELLKRYRIETSGKKCVVLGRSNIVGKPMAALMMQKAYPGDATVTVCHSRSKDLVKECREADIIIAALGQPNFVKAEMVKEGAVVIDVGTTRVPDASKKSGFKLTGDVKFDEVSPKCSFITPVPGGVGPMTIVSLMKNTLLAGKKAIYQ.

Residues 164–166 (GRS), Ser193, and Thr234 contribute to the NADP(+) site.

It belongs to the tetrahydrofolate dehydrogenase/cyclohydrolase family. As to quaternary structure, homodimer.

It carries out the reaction (6R)-5,10-methylene-5,6,7,8-tetrahydrofolate + NADP(+) = (6R)-5,10-methenyltetrahydrofolate + NADPH. The catalysed reaction is (6R)-5,10-methenyltetrahydrofolate + H2O = (6R)-10-formyltetrahydrofolate + H(+). Its pathway is one-carbon metabolism; tetrahydrofolate interconversion. Functionally, catalyzes the oxidation of 5,10-methylenetetrahydrofolate to 5,10-methenyltetrahydrofolate and then the hydrolysis of 5,10-methenyltetrahydrofolate to 10-formyltetrahydrofolate. This Bacteroides fragilis (strain ATCC 25285 / DSM 2151 / CCUG 4856 / JCM 11019 / LMG 10263 / NCTC 9343 / Onslow / VPI 2553 / EN-2) protein is Bifunctional protein FolD.